A 461-amino-acid polypeptide reads, in one-letter code: L-seryl-tRNA(Sec) selenium transferase (461 aa).

Lysine 294 carries the N6-(pyridoxal phosphate)lysine modification.

This sequence belongs to the SelA family. Pyridoxal 5'-phosphate is required as a cofactor.

It localises to the cytoplasm. It catalyses the reaction L-seryl-tRNA(Sec) + selenophosphate + H(+) = L-selenocysteinyl-tRNA(Sec) + phosphate. It participates in aminoacyl-tRNA biosynthesis; selenocysteinyl-tRNA(Sec) biosynthesis; selenocysteinyl-tRNA(Sec) from L-seryl-tRNA(Sec) (bacterial route): step 1/1. Functionally, converts seryl-tRNA(Sec) to selenocysteinyl-tRNA(Sec) required for selenoprotein biosynthesis. In Haemophilus influenzae (strain ATCC 51907 / DSM 11121 / KW20 / Rd), this protein is L-seryl-tRNA(Sec) selenium transferase.